Consider the following 142-residue polypeptide: NADH-quinone oxidoreductase subunit A 2 (142 aa).

Helical transmembrane passes span 18–38 (FLPL…LLLA), 73–93 (FYLI…IFAW), and 104–124 (GLVH…WLWL).

This sequence belongs to the complex I subunit 3 family. In terms of assembly, NDH-1 is composed of 14 different subunits. Subunits NuoA, H, J, K, L, M, N constitute the membrane sector of the complex.

The protein localises to the cell inner membrane. It carries out the reaction a quinone + NADH + 5 H(+)(in) = a quinol + NAD(+) + 4 H(+)(out). NDH-1 shuttles electrons from NADH, via FMN and iron-sulfur (Fe-S) centers, to quinones in the respiratory chain. The immediate electron acceptor for the enzyme in this species is believed to be ubiquinone. Couples the redox reaction to proton translocation (for every two electrons transferred, four hydrogen ions are translocated across the cytoplasmic membrane), and thus conserves the redox energy in a proton gradient. The sequence is that of NADH-quinone oxidoreductase subunit A 2 from Geobacter sulfurreducens (strain ATCC 51573 / DSM 12127 / PCA).